The sequence spans 270 residues: Orotidine 5'-phosphate decarboxylase (270 aa).

Lys89 acts as the Proton donor in catalysis.

The protein belongs to the OMP decarboxylase family. Type 2 subfamily.

The enzyme catalyses orotidine 5'-phosphate + H(+) = UMP + CO2. It functions in the pathway pyrimidine metabolism; UMP biosynthesis via de novo pathway; UMP from orotate: step 2/2. The protein is Orotidine 5'-phosphate decarboxylase of Dehalococcoides mccartyi (strain ATCC BAA-2266 / KCTC 15142 / 195) (Dehalococcoides ethenogenes (strain 195)).